A 312-amino-acid chain; its full sequence is Malate dehydrogenase (312 aa).

Residues 12–17 (GAGFTG) and aspartate 36 each bind NAD(+). Positions 87 and 93 each coordinate substrate. NAD(+) is bound by residues asparagine 100 and 123–125 (LTN). Substrate is bound at residue asparagine 125. The residue at position 149 (serine 149) is a Phosphoserine. Arginine 156 is a substrate binding site. The active-site Proton acceptor is histidine 180.

This sequence belongs to the LDH/MDH superfamily. MDH type 3 family.

It carries out the reaction (S)-malate + NAD(+) = oxaloacetate + NADH + H(+). Its function is as follows. Catalyzes the reversible oxidation of malate to oxaloacetate. The sequence is that of Malate dehydrogenase from Bacillus anthracis (strain A0248).